Consider the following 343-residue polypeptide: Protein RecA (343 aa).

66-73 (GPESSGKT) provides a ligand contact to ATP.

The protein belongs to the RecA family.

It localises to the cytoplasm. Functionally, can catalyze the hydrolysis of ATP in the presence of single-stranded DNA, the ATP-dependent uptake of single-stranded DNA by duplex DNA, and the ATP-dependent hybridization of homologous single-stranded DNAs. It interacts with LexA causing its activation and leading to its autocatalytic cleavage. This chain is Protein RecA, found in Rickettsia africae (strain ESF-5).